A 184-amino-acid chain; its full sequence is Tumor necrosis factor alpha-induced protein 8-like protein 2 (184 aa).

It belongs to the TNFAIP8 family. TNFAIP8L2 subfamily. May interact with CASP8; however, such result is unclear since could not reproduce the interaction with CASP8. Interacts with RAC1. In terms of processing, ubiquitinated in a BTRC-depdent manner; leading to degradation mediated through the proteasome pathway.

It localises to the cytoplasm. The protein resides in the nucleus. The protein localises to the lysosome. Acts as a negative regulator of innate and adaptive immunity by maintaining immune homeostasis. Plays a regulatory role in the Toll-like signaling pathway by determining the strength of LPS-induced signaling and gene expression. Inhibits TCR-mediated T-cell activation and negatively regulate T-cell function to prevent hyperresponsiveness. Also inhibits autolysosome formation via negatively modulating MTOR activation by interacting with RAC1 and promoting the disassociation of the RAC1-MTOR complex. Plays an essential role in NK-cell biology by acting as a checkpoint and displaying an expression pattern correlating with NK-cell maturation process and by negatively regulating NK-cell maturation and antitumor immunity. Mechanistically, suppresses IL-15-triggered mTOR activity in NK-cells. This is Tumor necrosis factor alpha-induced protein 8-like protein 2 (TNFAIP8L2) from Rhinolophus ferrumequinum (Greater horseshoe bat).